The sequence spans 165 residues: Probable velvet family sexual development regulator CC1G_12219 (165 aa).

Positions 1 to 121 (MSNTDAQTSF…SVWGAQVNVR (121 aa)) constitute a Velvet domain.

This sequence belongs to the velvet family.

It is found in the nucleus. Its function is as follows. Velvet-domain-containing protein that probably acts as a positive regulator of sexual development. The sequence is that of Probable velvet family sexual development regulator CC1G_12219 from Coprinopsis cinerea (strain Okayama-7 / 130 / ATCC MYA-4618 / FGSC 9003) (Inky cap fungus).